A 198-amino-acid polypeptide reads, in one-letter code: MPQLVLASTSSYRRALLEKLQLPFITDAPETDETPHAGEPAEALVQRLASAKAQALAGRYPQHLIIGSDQVCVIDGKITGKPLQYSTAVKQLQQASGQCVTFYTGLTLLNTANNSINCTCETFDVYFRTLSQAEIDGYLLREQPWNCAGSFKSEGLGITLFERLAGRDPNTLIGLPLIALTQMLIEQGVNPLTVKPVE.

Asp-69 functions as the Proton acceptor in the catalytic mechanism.

The protein belongs to the Maf family. YceF subfamily. A divalent metal cation serves as cofactor.

Its subcellular location is the cytoplasm. It carries out the reaction N(7)-methyl-GTP + H2O = N(7)-methyl-GMP + diphosphate + H(+). Functionally, nucleoside triphosphate pyrophosphatase that hydrolyzes 7-methyl-GTP (m(7)GTP). May have a dual role in cell division arrest and in preventing the incorporation of modified nucleotides into cellular nucleic acids. The protein is 7-methyl-GTP pyrophosphatase of Yersinia pseudotuberculosis serotype I (strain IP32953).